The chain runs to 414 residues: Gamma-glutamyl phosphate reductase (414 aa).

The protein belongs to the gamma-glutamyl phosphate reductase family.

The protein resides in the cytoplasm. It catalyses the reaction L-glutamate 5-semialdehyde + phosphate + NADP(+) = L-glutamyl 5-phosphate + NADPH + H(+). It functions in the pathway amino-acid biosynthesis; L-proline biosynthesis; L-glutamate 5-semialdehyde from L-glutamate: step 2/2. Catalyzes the NADPH-dependent reduction of L-glutamate 5-phosphate into L-glutamate 5-semialdehyde and phosphate. The product spontaneously undergoes cyclization to form 1-pyrroline-5-carboxylate. This is Gamma-glutamyl phosphate reductase from Caldanaerobacter subterraneus subsp. tengcongensis (strain DSM 15242 / JCM 11007 / NBRC 100824 / MB4) (Thermoanaerobacter tengcongensis).